The primary structure comprises 386 residues: 8-amino-7-oxononanoate synthase (386 aa).

Residue Arg-19 coordinates substrate. Residue 106–107 participates in pyridoxal 5'-phosphate binding; sequence GY. A substrate-binding site is contributed by His-131. Residues Ser-177, His-205, and Thr-233 each contribute to the pyridoxal 5'-phosphate site. Lys-236 bears the N6-(pyridoxal phosphate)lysine mark. Thr-350 contacts substrate.

It belongs to the class-II pyridoxal-phosphate-dependent aminotransferase family. BioF subfamily. In terms of assembly, homodimer. The cofactor is pyridoxal 5'-phosphate.

It carries out the reaction 6-carboxyhexanoyl-[ACP] + L-alanine + H(+) = (8S)-8-amino-7-oxononanoate + holo-[ACP] + CO2. Its pathway is cofactor biosynthesis; biotin biosynthesis. Its function is as follows. Catalyzes the decarboxylative condensation of pimeloyl-[acyl-carrier protein] and L-alanine to produce 8-amino-7-oxononanoate (AON), [acyl-carrier protein], and carbon dioxide. The sequence is that of 8-amino-7-oxononanoate synthase from Alcanivorax borkumensis (strain ATCC 700651 / DSM 11573 / NCIMB 13689 / SK2).